Reading from the N-terminus, the 692-residue chain is Elongation factor G (692 aa).

In terms of domain architecture, tr-type G spans 8 to 283 (NRIRNIGIAA…AVIDYLPAPT (276 aa)). GTP is bound by residues 17-24 (AHIDAGKT), 81-85 (DTPGH), and 135-138 (NKMD).

The protein belongs to the TRAFAC class translation factor GTPase superfamily. Classic translation factor GTPase family. EF-G/EF-2 subfamily.

The protein resides in the cytoplasm. In terms of biological role, catalyzes the GTP-dependent ribosomal translocation step during translation elongation. During this step, the ribosome changes from the pre-translocational (PRE) to the post-translocational (POST) state as the newly formed A-site-bound peptidyl-tRNA and P-site-bound deacylated tRNA move to the P and E sites, respectively. Catalyzes the coordinated movement of the two tRNA molecules, the mRNA and conformational changes in the ribosome. The protein is Elongation factor G of Helicobacter pylori (strain G27).